Consider the following 197-residue polypeptide: MSSIKLIVGLANPGAEYAQTRHNAGAWYVDLLALRHNQQLKEESKFFGYTARLNLAGQDVRLLVPSTFMNLSGKAVAAMAGFYRILPEEILVAHDELDIPPGVAKLKLGGGNGGHNGLKDIQSKLGNNPNFYRLRIGIGHPGDKSKVTGFVLGNPPASEQTLIDDAIDESIRCTEVLLKEDITKAMNRLHSFKAGAQ.

Y17 serves as a coordination point for tRNA. The Proton acceptor role is filled by H22. Positions 68, 70, and 116 each coordinate tRNA.

The protein belongs to the PTH family. In terms of assembly, monomer.

The protein localises to the cytoplasm. The catalysed reaction is an N-acyl-L-alpha-aminoacyl-tRNA + H2O = an N-acyl-L-amino acid + a tRNA + H(+). Functionally, hydrolyzes ribosome-free peptidyl-tRNAs (with 1 or more amino acids incorporated), which drop off the ribosome during protein synthesis, or as a result of ribosome stalling. In terms of biological role, catalyzes the release of premature peptidyl moieties from peptidyl-tRNA molecules trapped in stalled 50S ribosomal subunits, and thus maintains levels of free tRNAs and 50S ribosomes. The sequence is that of Peptidyl-tRNA hydrolase from Yersinia enterocolitica serotype O:8 / biotype 1B (strain NCTC 13174 / 8081).